The sequence spans 409 residues: Nucleoprotein (409 aa).

Disordered stretches follow at residues 1–32 (MASG…SSGN), 44–63 (LNSP…ENLK), 120–145 (GADT…LRFS), and 164–193 (RSGR…SGAE). Over residues 15–31 (PVIKLGGPKPPKVGSSG) the composition is skewed to low complexity. The tract at residues 29-160 (SSGNASWFQA…GNFRWDFIPI (132 aa)) is RNA-binding. Residues 31–156 (GNASWFQALK…GGPDGNFRWD (126 aa)) enclose the CoV N NTD domain. Positions 164–179 (RSGRSTAASSAASSRA) are enriched in low complexity. Residues 180 to 192 (PSRDGSRGRRSGA) show a composition bias toward basic and acidic residues. Ser190 is subject to Phosphoserine; by host. A CoV N CTD domain is found at 215–331 (TKAKADEMAH…QCVDGVGTRP (117 aa)). Residues 226–333 (RYCKRTIPPG…VDGVGTRPKD (108 aa)) form a dimerization region. Cys320 and Cys323 form a disulfide bridge. The disordered stretch occupies residues 327–409 (VGTRPKDDEP…GESALGENEL (83 aa)). The span at 341–355 (RPNSRPATRTSSPAP) shows a compositional bias: polar residues. Positions 368–384 (KQDDEVDKALTSDEERN) are enriched in basic and acidic residues. Thr378 carries the post-translational modification Phosphothreonine; by host. Residue Ser379 is modified to Phosphoserine; by host.

This sequence belongs to the gammacoronavirus nucleocapsid protein family. As to quaternary structure, homooligomer. Both monomeric and oligomeric forms interact with RNA. Interacts with protein M. Interacts with NSP3; this interaction serves to tether the genome to the newly translated replicase-transcriptase complex at a very early stage of infection. Post-translationally, ADP-ribosylated. The ADP-ribosylation is retained in the virion during infection. Phosphorylated on serine and threonine residues.

It localises to the virion. The protein resides in the host endoplasmic reticulum-Golgi intermediate compartment. The protein localises to the host Golgi apparatus. Its function is as follows. Packages the positive strand viral genome RNA into a helical ribonucleocapsid (RNP) and plays a fundamental role during virion assembly through its interactions with the viral genome and membrane protein M. Plays an important role in enhancing the efficiency of subgenomic viral RNA transcription as well as viral replication. In Avian infectious bronchitis virus (strain D1466) (IBV), this protein is Nucleoprotein.